We begin with the raw amino-acid sequence, 185 residues long: Mitochondrial inner membrane protease atp23 (185 aa).

Histidine 86 is a binding site for a divalent metal cation. Residue glutamate 87 is part of the active site. Histidine 90 provides a ligand contact to a divalent metal cation.

Belongs to the peptidase M76 family.

It localises to the mitochondrion inner membrane. Its function is as follows. Has a dual role in the assembly of mitochondrial ATPase. Acts as a protease that removes N-terminal residues of mitochondrial ATPase CF(0) subunit 6 at the intermembrane space side. Also involved in the correct assembly of the membrane-embedded ATPase CF(0) particle, probably mediating association of subunit 6 with the subunit 9 ring. The polypeptide is Mitochondrial inner membrane protease atp23 (atp23) (Schizosaccharomyces pombe (strain 972 / ATCC 24843) (Fission yeast)).